The following is a 466-amino-acid chain: Oxygen-independent coproporphyrinogen III oxidase (466 aa).

Positions 51–285 (NYKKTPLSLY…QATIADLTEQ (235 aa)) constitute a Radical SAM core domain. Tyr-60 is a binding site for S-adenosyl-L-methionine. 2 residues coordinate [4Fe-4S] cluster: Cys-66 and Cys-70. Phe-72 serves as a coordination point for S-adenosyl-L-methionine. Position 73 (Cys-73) interacts with [4Fe-4S] cluster. S-adenosyl-L-methionine is bound by residues Gly-117, 118–119 (GT), Glu-150, Gln-177, Arg-189, Asp-214, Ala-248, and Ile-334.

It belongs to the anaerobic coproporphyrinogen-III oxidase family. As to quaternary structure, monomer. It depends on [4Fe-4S] cluster as a cofactor.

The protein localises to the cytoplasm. It carries out the reaction coproporphyrinogen III + 2 S-adenosyl-L-methionine = protoporphyrinogen IX + 2 5'-deoxyadenosine + 2 L-methionine + 2 CO2. Its pathway is porphyrin-containing compound metabolism; protoporphyrin-IX biosynthesis; protoporphyrinogen-IX from coproporphyrinogen-III (AdoMet route): step 1/1. In terms of biological role, involved in the heme and chlorophyll biosynthesis. Catalyzes the anaerobic oxidative decarboxylation of propionate groups of rings A and B of coproporphyrinogen III to yield the vinyl groups in protoporphyrinogen IX. This Synechocystis sp. (strain ATCC 27184 / PCC 6803 / Kazusa) protein is Oxygen-independent coproporphyrinogen III oxidase (hemN).